The following is a 200-amino-acid chain: LHFPL tetraspan subfamily member 7 protein (200 aa).

Transmembrane regions (helical) follow at residues 5–27 (VWVA…PAWF), 68–88 (VSAV…IFLL), 113–133 (AATA…SPFI), and 150–170 (LGWG…LPII).

Belongs to the TMEM211 family.

Its subcellular location is the membrane. The chain is LHFPL tetraspan subfamily member 7 protein from Homo sapiens (Human).